A 178-amino-acid chain; its full sequence is Fatty-acid and retinol-binding protein 1 (178 aa).

Residues 1-16 form the signal peptide; sequence MYHRLILLALVGTTMA. 2 coiled-coil regions span residues 67 to 89 and 130 to 153; these read DAAL…ELRN and KQAA…ELKV.

This sequence belongs to the fatty-acid and retinol-binding protein (FARBP) family. Post-translationally, not glycosylated.

It is found in the secreted. In terms of biological role, binds retinol and different fatty acids. In Brugia pahangi (Filarial nematode worm), this protein is Fatty-acid and retinol-binding protein 1.